The chain runs to 140 residues: Nucleoside diphosphate kinase (140 aa).

Residues Lys-11, Phe-59, Arg-87, Thr-93, Arg-104, and Asn-114 each coordinate ATP. Residue His-117 is the Pros-phosphohistidine intermediate of the active site.

It belongs to the NDK family. As to quaternary structure, homotetramer. Requires Mg(2+) as cofactor.

It is found in the cytoplasm. The catalysed reaction is a 2'-deoxyribonucleoside 5'-diphosphate + ATP = a 2'-deoxyribonucleoside 5'-triphosphate + ADP. It catalyses the reaction a ribonucleoside 5'-diphosphate + ATP = a ribonucleoside 5'-triphosphate + ADP. Major role in the synthesis of nucleoside triphosphates other than ATP. The ATP gamma phosphate is transferred to the NDP beta phosphate via a ping-pong mechanism, using a phosphorylated active-site intermediate. This chain is Nucleoside diphosphate kinase, found in Rickettsia felis (strain ATCC VR-1525 / URRWXCal2) (Rickettsia azadi).